Here is a 350-residue protein sequence, read N- to C-terminus: Protein-glutamate methylesterase/protein-glutamine glutaminase (350 aa).

A Response regulatory domain is found at 5–122; sequence TVLCVDDSAL…REGMLAYSEL (118 aa). Residue Asp-56 is modified to 4-aspartylphosphate. Residues 153-345 enclose the CheB-type methylesterase domain; that stretch reads LLSSEKLIAV…KRMLAKISSG (193 aa). Catalysis depends on residues Ser-165, His-191, and Asp-287.

Belongs to the CheB family. Phosphorylated by CheA. Phosphorylation of the N-terminal regulatory domain activates the methylesterase activity.

It localises to the cytoplasm. The enzyme catalyses [protein]-L-glutamate 5-O-methyl ester + H2O = L-glutamyl-[protein] + methanol + H(+). It catalyses the reaction L-glutaminyl-[protein] + H2O = L-glutamyl-[protein] + NH4(+). Involved in chemotaxis. Part of a chemotaxis signal transduction system that modulates chemotaxis in response to various stimuli. Catalyzes the demethylation of specific methylglutamate residues introduced into the chemoreceptors (methyl-accepting chemotaxis proteins or MCP) by CheR. Also mediates the irreversible deamidation of specific glutamine residues to glutamic acid. The chain is Protein-glutamate methylesterase/protein-glutamine glutaminase from Photorhabdus laumondii subsp. laumondii (strain DSM 15139 / CIP 105565 / TT01) (Photorhabdus luminescens subsp. laumondii).